We begin with the raw amino-acid sequence, 88 residues long: Small ribosomal subunit protein bS20 (88 aa).

The tract at residues 1–21 (MANTTSAKKATRKIARRTAVN) is disordered.

The protein belongs to the bacterial ribosomal protein bS20 family.

Its function is as follows. Binds directly to 16S ribosomal RNA. The polypeptide is Small ribosomal subunit protein bS20 (Sinorhizobium fredii (strain NBRC 101917 / NGR234)).